A 381-amino-acid chain; its full sequence is Chaperone protein DnaJ (381 aa).

Residues 5–70 (DFYEVLGVGR…QKKAAYDQYG (66 aa)) enclose the J domain. The CR-type zinc finger occupies 136–214 (GCSKEIEVPT…CHGQGRKQKT (79 aa)). Residues Cys149, Cys152, Cys166, Cys169, Cys188, Cys191, Cys202, and Cys205 each contribute to the Zn(2+) site. CXXCXGXG motif repeat units follow at residues 149–156 (CDACDGSG), 166–173 (CGTCHGHG), 188–195 (CPTCHGKG), and 202–209 (CNVCHGQG).

The protein belongs to the DnaJ family. As to quaternary structure, homodimer. Requires Zn(2+) as cofactor.

Its subcellular location is the cytoplasm. Participates actively in the response to hyperosmotic and heat shock by preventing the aggregation of stress-denatured proteins and by disaggregating proteins, also in an autonomous, DnaK-independent fashion. Unfolded proteins bind initially to DnaJ; upon interaction with the DnaJ-bound protein, DnaK hydrolyzes its bound ATP, resulting in the formation of a stable complex. GrpE releases ADP from DnaK; ATP binding to DnaK triggers the release of the substrate protein, thus completing the reaction cycle. Several rounds of ATP-dependent interactions between DnaJ, DnaK and GrpE are required for fully efficient folding. Also involved, together with DnaK and GrpE, in the DNA replication of plasmids through activation of initiation proteins. The chain is Chaperone protein DnaJ from Vibrio cholerae serotype O1 (strain ATCC 39541 / Classical Ogawa 395 / O395).